A 221-amino-acid polypeptide reads, in one-letter code: Histidine biosynthesis bifunctional protein HisIE (221 aa).

Positions 1–129 are phosphoribosyl-AMP cyclohydrolase; that stretch reads MAYSKNFSIE…AKKTSPFSNI (129 aa). Residues 130-221 form a phosphoribosyl-ATP pyrophosphohydrolase region; the sequence is CSELFDTLHE…VLESRRGKNN (92 aa).

In the N-terminal section; belongs to the PRA-CH family. It in the C-terminal section; belongs to the PRA-PH family.

The protein resides in the cytoplasm. The enzyme catalyses 1-(5-phospho-beta-D-ribosyl)-ATP + H2O = 1-(5-phospho-beta-D-ribosyl)-5'-AMP + diphosphate + H(+). It catalyses the reaction 1-(5-phospho-beta-D-ribosyl)-5'-AMP + H2O = 1-(5-phospho-beta-D-ribosyl)-5-[(5-phospho-beta-D-ribosylamino)methylideneamino]imidazole-4-carboxamide. Its pathway is amino-acid biosynthesis; L-histidine biosynthesis; L-histidine from 5-phospho-alpha-D-ribose 1-diphosphate: step 2/9. It participates in amino-acid biosynthesis; L-histidine biosynthesis; L-histidine from 5-phospho-alpha-D-ribose 1-diphosphate: step 3/9. The polypeptide is Histidine biosynthesis bifunctional protein HisIE (Prochlorococcus marinus subsp. pastoris (strain CCMP1986 / NIES-2087 / MED4)).